The sequence spans 181 residues: uncharacterized protein (181 aa).

Residues Met-1–Ala-23 form the signal peptide.

This is an uncharacterized protein from Bacillus subtilis (strain 168).